Here is a 90-residue protein sequence, read N- to C-terminus: Small ribosomal subunit protein bS20 (90 aa).

A disordered region spans residues 1 to 25; the sequence is MANSAQARKRARQAAKANSHNSALR.

The protein belongs to the bacterial ribosomal protein bS20 family.

In terms of biological role, binds directly to 16S ribosomal RNA. The polypeptide is Small ribosomal subunit protein bS20 (Burkholderia multivorans (strain ATCC 17616 / 249)).